The sequence spans 696 residues: HIPL2 protein (696 aa).

A signal peptide spans M1–S24. N38, N69, N74, N108, N124, N148, N175, N339, N431, N513, N519, N528, N581, and N651 each carry an N-linked (GlcNAc...) asparagine glycan. S672 carries the GPI-anchor amidated serine lipid modification. A propeptide spans S673 to D696 (removed in mature form).

This sequence belongs to the PQQ oxidoreductase GdhB family. It depends on pyrroloquinoline quinone as a cofactor.

The protein localises to the cell membrane. This Arabidopsis thaliana (Mouse-ear cress) protein is HIPL2 protein (HIPL2).